The sequence spans 245 residues: tRNA1(Val) (adenine(37)-N6)-methyltransferase (245 aa).

It belongs to the methyltransferase superfamily. tRNA (adenine-N(6)-)-methyltransferase family.

It localises to the cytoplasm. The enzyme catalyses adenosine(37) in tRNA1(Val) + S-adenosyl-L-methionine = N(6)-methyladenosine(37) in tRNA1(Val) + S-adenosyl-L-homocysteine + H(+). Functionally, specifically methylates the adenine in position 37 of tRNA(1)(Val) (anticodon cmo5UAC). This is tRNA1(Val) (adenine(37)-N6)-methyltransferase from Escherichia coli (strain UTI89 / UPEC).